We begin with the raw amino-acid sequence, 373 residues long: Beta sliding clamp (373 aa).

The protein belongs to the beta sliding clamp family. In terms of assembly, forms a ring-shaped head-to-tail homodimer around DNA which binds and tethers DNA polymerases and other proteins to the DNA. The DNA replisome complex has a single clamp-loading complex (3 tau and 1 each of delta, delta', psi and chi subunits) which binds 3 Pol III cores (1 core on the leading strand and 2 on the lagging strand) each with a beta sliding clamp dimer. Additional proteins in the replisome are other copies of gamma, psi and chi, Ssb, DNA helicase and RNA primase.

It is found in the cytoplasm. Its function is as follows. Confers DNA tethering and processivity to DNA polymerases and other proteins. Acts as a clamp, forming a ring around DNA (a reaction catalyzed by the clamp-loading complex) which diffuses in an ATP-independent manner freely and bidirectionally along dsDNA. Initially characterized for its ability to contact the catalytic subunit of DNA polymerase III (Pol III), a complex, multichain enzyme responsible for most of the replicative synthesis in bacteria; Pol III exhibits 3'-5' exonuclease proofreading activity. The beta chain is required for initiation of replication as well as for processivity of DNA replication. The sequence is that of Beta sliding clamp (dnaN) from Mycoplasmopsis pulmonis (strain UAB CTIP) (Mycoplasma pulmonis).